Here is a 116-residue protein sequence, read N- to C-terminus: Large ribosomal subunit protein bL17 (116 aa).

This sequence belongs to the bacterial ribosomal protein bL17 family. In terms of assembly, part of the 50S ribosomal subunit. Contacts protein L32.

The protein is Large ribosomal subunit protein bL17 of Trichormus variabilis (strain ATCC 29413 / PCC 7937) (Anabaena variabilis).